The chain runs to 147 residues: Large ribosomal subunit protein uL13 (147 aa).

Residues 127 to 147 are disordered; that stretch reads GPEHPHSAQQPKVLEIQGAAR.

This sequence belongs to the universal ribosomal protein uL13 family. Part of the 50S ribosomal subunit.

This protein is one of the early assembly proteins of the 50S ribosomal subunit, although it is not seen to bind rRNA by itself. It is important during the early stages of 50S assembly. This is Large ribosomal subunit protein uL13 from Verminephrobacter eiseniae (strain EF01-2).